The primary structure comprises 164 residues: Thiol peroxidase (164 aa).

A Thioredoxin domain is found at 18-163 (VKTGETAPEF…FESALEAYRN (146 aa)). The Cysteine sulfenic acid (-SOH) intermediate role is filled by Cys-60. Cys-60 and Cys-93 are joined by a disulfide.

Belongs to the peroxiredoxin family. Tpx subfamily. As to quaternary structure, homodimer.

The enzyme catalyses a hydroperoxide + [thioredoxin]-dithiol = an alcohol + [thioredoxin]-disulfide + H2O. In terms of biological role, thiol-specific peroxidase that catalyzes the reduction of hydrogen peroxide and organic hydroperoxides to water and alcohols, respectively. Plays a role in cell protection against oxidative stress by detoxifying peroxides. In Staphylococcus saprophyticus subsp. saprophyticus (strain ATCC 15305 / DSM 20229 / NCIMB 8711 / NCTC 7292 / S-41), this protein is Thiol peroxidase.